The chain runs to 322 residues: CMP-sialic acid transporter 1 (322 aa).

Topologically, residues 1–2 are cytoplasmic; the sequence is MQ. A helical membrane pass occupies residues 3-23; the sequence is WYLVAALLTVLTSSQGILTTL. Over 24–33 the chain is Lumenal; the sequence is SQSNGKYKYD. Residues 34–54 traverse the membrane as a helical segment; it reads YATIPFLAELFKLSFSSFFLW. The Cytoplasmic portion of the chain corresponds to 55–75; that stretch reads KECQSSSPPRMTKEWRSIRLY. Residues 76–96 traverse the membrane as a helical segment; sequence LVPSVIYLIHNNVQFATLTYV. Topologically, residues 97-100 are lumenal; that stretch reads DPST. The helical transmembrane segment at 101 to 120 threads the bilayer; sequence YQIMGNLKIVTTGILFRLVL. Topologically, residues 121-126 are cytoplasmic; it reads KRKLSN. The helical transmembrane segment at 127 to 144 threads the bilayer; that stretch reads LQWMAVVLLAVGTTTSQV. Residues 145 to 157 are Lumenal-facing; it reads KGCGDAPCDSLFS. Residues 158–178 traverse the membrane as a helical segment; that stretch reads APFQGYMLGILSACLSALAGV. The Cytoplasmic portion of the chain corresponds to 179 to 198; it reads YTEYLMKKNNDSLYWQNVQL. Residues 199–219 form a helical membrane-spanning segment; it reads YTFGVIFNMGWLIYGDFKAGF. The Lumenal segment spans residues 220-233; that stretch reads ERGPWWQRLFNGYS. A helical transmembrane segment spans residues 234-254; sequence ITTWMVVFNLGSTGLLVSWLM. Residues 255–262 are Cytoplasmic-facing; that stretch reads KYSDNIVK. The chain crosses the membrane as a helical span at residues 263–283; it reads VYSTSMAMLLTMVLSVYLFNV. Residues 284–286 are Lumenal-facing; that stretch reads RAT.

It belongs to the nucleotide-sugar transporter family. CMP-Sialate:CMP antiporter (TC 2.A.7.12) subfamily. As to expression, expressed in roots, leaves and stalks.

The protein resides in the golgi apparatus membrane. Sugar transporter involved in the transport of CMP-sialic acid from the cytoplasm into the Golgi. May transport important nucleotide sugars such as CMP-Kdo (2-keto-3-deoxy-D-manno-octulosonic acid) in physiological conditions. The polypeptide is CMP-sialic acid transporter 1 (Oryza sativa subsp. japonica (Rice)).